A 132-amino-acid chain; its full sequence is MNPVEDFTKLNLFGTFTNFVSAPVPFDCYHDPTKSETILVADLPGVLPNDMKVNVDKDKLIIQGKRECEKHDYLFSNRWCGSFIHHISFAKEVKASDVNVGLGEGILKITISNTPTNNVIGVKMSNNNKVEF.

The 117-residue stretch at 15–131 (TFTNFVSAPV…VKMSNNNKVE (117 aa)) folds into the sHSP domain.

Belongs to the small heat shock protein (HSP20) family.

The sequence is that of Small heat shock protein hspL (hspL) from Dictyostelium discoideum (Social amoeba).